Consider the following 505-residue polypeptide: Phosphomevalonate kinase, peroxisomal (505 aa).

Position 2 is an N-acetylalanine (alanine 2). The short motif at 57–65 is the Peroxisomal targeting signal PTS2 element; it reads DVKLTSPQL. 177 to 187 contacts ATP; that stretch reads VAKTGLGSSAA.

It belongs to the GHMP kinase family. Mevalonate kinase subfamily.

Its subcellular location is the peroxisome. It catalyses the reaction (R)-5-phosphomevalonate + ATP = (R)-5-diphosphomevalonate + ADP. The protein operates within isoprenoid biosynthesis; isopentenyl diphosphate biosynthesis via mevalonate pathway; isopentenyl diphosphate from (R)-mevalonate: step 2/3. In Arabidopsis thaliana (Mouse-ear cress), this protein is Phosphomevalonate kinase, peroxisomal.